We begin with the raw amino-acid sequence, 195 residues long: MELPIRLVVGLGNPGDKYTSTRHNIGSDWLDRLADAQRVSFALDIRFRGLCARIVQSDTDIWLLKPQTYMNASGMSVGAMCRYYKITPEQILVVHDELDLQPGIIKLKSGGGTGGHNGLKSIVADLSTQVFWRLRIGVGHPGDRNQVVDYVLHLPRREEAALIDEAIDHSIQVWPLIARGNFAAAMQQLHTRQEN.

Tyrosine 18 contributes to the tRNA binding site. Catalysis depends on histidine 23, which acts as the Proton acceptor. Positions 69, 71, and 117 each coordinate tRNA.

It belongs to the PTH family. As to quaternary structure, monomer.

Its subcellular location is the cytoplasm. The catalysed reaction is an N-acyl-L-alpha-aminoacyl-tRNA + H2O = an N-acyl-L-amino acid + a tRNA + H(+). Hydrolyzes ribosome-free peptidyl-tRNAs (with 1 or more amino acids incorporated), which drop off the ribosome during protein synthesis, or as a result of ribosome stalling. In terms of biological role, catalyzes the release of premature peptidyl moieties from peptidyl-tRNA molecules trapped in stalled 50S ribosomal subunits, and thus maintains levels of free tRNAs and 50S ribosomes. The chain is Peptidyl-tRNA hydrolase from Nitrosomonas eutropha (strain DSM 101675 / C91 / Nm57).